A 210-amino-acid polypeptide reads, in one-letter code: Outer-membrane lipoprotein LolB (210 aa).

The first 19 residues, 1–19 (MNHLKSFFTALVAGFILTA), serve as a signal peptide directing secretion. Cys-20 carries the N-palmitoyl cysteine lipid modification. Cys-20 is lipidated: S-diacylglycerol cysteine.

This sequence belongs to the LolB family. As to quaternary structure, monomer.

The protein resides in the cell outer membrane. Functionally, plays a critical role in the incorporation of lipoproteins in the outer membrane after they are released by the LolA protein. This Mannheimia succiniciproducens (strain KCTC 0769BP / MBEL55E) protein is Outer-membrane lipoprotein LolB.